We begin with the raw amino-acid sequence, 472 residues long: Methanethiol oxidase (472 aa).

The protein belongs to the selenium-binding protein family.

The protein resides in the nucleus. It is found in the cytoplasm. The protein localises to the cytosol. It localises to the membrane. It carries out the reaction methanethiol + O2 + H2O = hydrogen sulfide + formaldehyde + H2O2 + H(+). It functions in the pathway organosulfur degradation. In terms of biological role, catalyzes the oxidation of methanethiol, an organosulfur compound known to be produced in substantial amounts by gut bacteria. Selenium-binding protein which may be involved in the sensing of reactive xenobiotics in the cytoplasm. May be involved in intra-Golgi protein transport. This is Methanethiol oxidase (selenbp1-b) from Xenopus laevis (African clawed frog).